We begin with the raw amino-acid sequence, 519 residues long: 3-octaprenyl-4-hydroxybenzoate carboxy-lyase (519 aa).

Mn(2+) is bound at residue Asn-177. Prenylated FMN is bound by residues 180-182 (IYR), 194-196 (RWL), and 199-200 (RG). Residue Glu-243 participates in Mn(2+) binding. Asp-318 (proton donor) is an active-site residue.

The protein belongs to the UbiD family. As to quaternary structure, homohexamer. Prenylated FMN is required as a cofactor. It depends on Mn(2+) as a cofactor.

It localises to the cell membrane. The enzyme catalyses a 4-hydroxy-3-(all-trans-polyprenyl)benzoate + H(+) = a 2-(all-trans-polyprenyl)phenol + CO2. It participates in cofactor biosynthesis; ubiquinone biosynthesis. Functionally, catalyzes the decarboxylation of 3-octaprenyl-4-hydroxy benzoate to 2-octaprenylphenol, an intermediate step in ubiquinone biosynthesis. The chain is 3-octaprenyl-4-hydroxybenzoate carboxy-lyase from Burkholderia thailandensis (strain ATCC 700388 / DSM 13276 / CCUG 48851 / CIP 106301 / E264).